Consider the following 356-residue polypeptide: Galectin-9C (356 aa).

In terms of domain architecture, Galectin 1 spans 17-148 (FSGTIQGGLQ…SVQLSYISFQ (132 aa)). 82–88 (WGPEERK) is a binding site for a beta-D-galactoside. A disordered region spans residues 170-190 (FPPRPRGRRQKPPSVRPANPA). A Galectin 2 domain is found at 228 to 356 (FITTIPGGLY…GDIQLTHVQT (129 aa)). Residue 288 to 294 (WGSEERS) coordinates a beta-D-galactoside.

Its function is as follows. Binds galactosides. The chain is Galectin-9C (LGALS9C) from Homo sapiens (Human).